The primary structure comprises 384 residues: Lipid-A-disaccharide synthase (384 aa).

This sequence belongs to the LpxB family.

It carries out the reaction a lipid X + a UDP-2-N,3-O-bis[(3R)-3-hydroxyacyl]-alpha-D-glucosamine = a lipid A disaccharide + UDP + H(+). It participates in bacterial outer membrane biogenesis; LPS lipid A biosynthesis. Condensation of UDP-2,3-diacylglucosamine and 2,3-diacylglucosamine-1-phosphate to form lipid A disaccharide, a precursor of lipid A, a phosphorylated glycolipid that anchors the lipopolysaccharide to the outer membrane of the cell. The sequence is that of Lipid-A-disaccharide synthase from Neisseria meningitidis serogroup C / serotype 2a (strain ATCC 700532 / DSM 15464 / FAM18).